Here is a 197-residue protein sequence, read N- to C-terminus: Glycerol-3-phosphate acyltransferase (197 aa).

5 helical membrane-spanning segments follow: residues 1 to 21, 78 to 98, 111 to 131, 136 to 155, and 159 to 176; these read MNIL…GFLI, LIEV…IWLG, MFLA…LIVL, FVSL…MFFY, and FIHT…LVIW.

It belongs to the PlsY family. Probably interacts with PlsX.

It localises to the cell inner membrane. The enzyme catalyses an acyl phosphate + sn-glycerol 3-phosphate = a 1-acyl-sn-glycero-3-phosphate + phosphate. It participates in lipid metabolism; phospholipid metabolism. Functionally, catalyzes the transfer of an acyl group from acyl-phosphate (acyl-PO(4)) to glycerol-3-phosphate (G3P) to form lysophosphatidic acid (LPA). This enzyme utilizes acyl-phosphate as fatty acyl donor, but not acyl-CoA or acyl-ACP. This chain is Glycerol-3-phosphate acyltransferase, found in Prochlorococcus marinus (strain MIT 9215).